Consider the following 163-residue polypeptide: Nucleotide-binding protein Tery_2743 (163 aa).

The protein belongs to the YajQ family.

Nucleotide-binding protein. The chain is Nucleotide-binding protein Tery_2743 from Trichodesmium erythraeum (strain IMS101).